The following is a 515-amino-acid chain: Maturase K (515 aa).

This sequence belongs to the intron maturase 2 family. MatK subfamily.

It is found in the plastid. It localises to the chloroplast. Usually encoded in the trnK tRNA gene intron. Probably assists in splicing its own and other chloroplast group II introns. In Pinus elliottii (Slash pine), this protein is Maturase K.